The primary structure comprises 131 residues: Phosphoribosyl-AMP cyclohydrolase (131 aa).

Asp78 is a Mg(2+) binding site. Cys79 contributes to the Zn(2+) binding site. Mg(2+) contacts are provided by Asp80 and Asp82. Residues Cys96 and Cys103 each contribute to the Zn(2+) site.

The protein belongs to the PRA-CH family. As to quaternary structure, homodimer. Mg(2+) is required as a cofactor. Requires Zn(2+) as cofactor.

It localises to the cytoplasm. The catalysed reaction is 1-(5-phospho-beta-D-ribosyl)-5'-AMP + H2O = 1-(5-phospho-beta-D-ribosyl)-5-[(5-phospho-beta-D-ribosylamino)methylideneamino]imidazole-4-carboxamide. It participates in amino-acid biosynthesis; L-histidine biosynthesis; L-histidine from 5-phospho-alpha-D-ribose 1-diphosphate: step 3/9. Its function is as follows. Catalyzes the hydrolysis of the adenine ring of phosphoribosyl-AMP. The polypeptide is Phosphoribosyl-AMP cyclohydrolase (Neisseria meningitidis serogroup A / serotype 4A (strain DSM 15465 / Z2491)).